Reading from the N-terminus, the 254-residue chain is Imidazole glycerol phosphate synthase subunit HisF (254 aa).

Residues aspartate 12 and aspartate 131 contribute to the active site.

The protein belongs to the HisA/HisF family. In terms of assembly, heterodimer of HisH and HisF.

Its subcellular location is the cytoplasm. The catalysed reaction is 5-[(5-phospho-1-deoxy-D-ribulos-1-ylimino)methylamino]-1-(5-phospho-beta-D-ribosyl)imidazole-4-carboxamide + L-glutamine = D-erythro-1-(imidazol-4-yl)glycerol 3-phosphate + 5-amino-1-(5-phospho-beta-D-ribosyl)imidazole-4-carboxamide + L-glutamate + H(+). It functions in the pathway amino-acid biosynthesis; L-histidine biosynthesis; L-histidine from 5-phospho-alpha-D-ribose 1-diphosphate: step 5/9. IGPS catalyzes the conversion of PRFAR and glutamine to IGP, AICAR and glutamate. The HisF subunit catalyzes the cyclization activity that produces IGP and AICAR from PRFAR using the ammonia provided by the HisH subunit. The protein is Imidazole glycerol phosphate synthase subunit HisF of Herminiimonas arsenicoxydans.